The sequence spans 952 residues: Histone deacetylase 7 (952 aa).

Transcription repression stretches follow at residues 1–268 and 218–546; these read MDLR…DSDR and GPNP…EHAG. Residues 49 to 149 form an interaction with MEF2A region; sequence SMDTPMPELQ…LPSDPPEHFP (101 aa). A Phosphoserine modification is found at serine 109. Disordered regions lie at residues 130–224 and 261–283; these read LSSF…PILG and PARADSDRRTHPTLGPRGPILGS. Serine 155 carries the post-translational modification Phosphoserine; by MARK2, MARK3 and PKD/PRKD1. Basic and acidic residues predominate over residues 167–181; the sequence is KSLERRKNPLLRKES. A Phosphoserine; by PKD/PRKD2 modification is found at serine 181. Low complexity predominate over residues 197–212; sequence SSPSSSSTPASGCSSP. Phosphoserine is present on serine 283. At threonine 286 the chain carries Phosphothreonine. Disordered regions lie at residues 349–377, 389–441, and 460–510; these read LHWPLSRTRSEPLPPSATAPPPPGPMQPR, KRSA…GPAP, and LPRG…SSSE. Serine 358 carries the phosphoserine; by PKD/PRKD1 modification. Residues 360–374 show a composition bias toward pro residues; it reads PLPPSATAPPPPGPM. Phosphoserine is present on residues serine 364, serine 405, serine 486, serine 487, and serine 507. A compositionally biased stretch (low complexity) spans 482-503; it reads SRAQSSPAAPASLSAPEPASQA. The interval 512–865 is histone deacetylase; the sequence is PARTLPFTTG…VAALLGNRVD (354 aa). Residues cysteine 533, cysteine 535, and histidine 541 each contribute to the Zn(2+) site. Serine 595 carries the post-translational modification Phosphoserine. Zn(2+) is bound at residue cysteine 618. Residue histidine 670 is part of the active site. The interaction with SIN3A stretch occupies residues 877-952; sequence NLNAIRSLEA…LVEEEEPMNL (76 aa). A Nuclear export signal motif is present at residues 917 to 952; that stretch reads KEEVEAVTALASLSVGILAEDRPSEQLVEEEEPMNL.

The protein belongs to the histone deacetylase family. HD type 2 subfamily. In terms of assembly, interacts with HDAC1, HDAC2, HDAC3, HDAC4, HDAC5, NCOR1, NCOR2, SIN3A, SIN3B, RBBP4, RBBP7, MTA1L1, SAP30 and MBD3. Interacts with KAT5 and EDNRA. Interacts with the 14-3-3 protein YWHAE, MEF2A, MEF2B and MEF2C. Interacts with ZMYND15. Interacts with KDM5B. Interacts with PML. Interacts with FOXP3. Interacts with RARA. In terms of processing, may be phosphorylated by CaMK1. Phosphorylated by the PKC kinases PKN1 and PKN2, impairing nuclear import. Phosphorylation at Ser-155 by MARK2, MARK3 and PRKD1 promotes interaction with 14-3-3 proteins and export from the nucleus. Phosphorylation at Ser-155 is a prerequisite for phosphorylation at Ser-181.

It is found in the nucleus. It localises to the cytoplasm. It carries out the reaction N(6)-acetyl-L-lysyl-[histone] + H2O = L-lysyl-[histone] + acetate. It catalyses the reaction N(6)-acetyl-L-lysyl-[protein] + H2O = L-lysyl-[protein] + acetate. Its function is as follows. Responsible for the deacetylation of lysine residues on the N-terminal part of the core histones (H2A, H2B, H3 and H4). Histone deacetylation gives a tag for epigenetic repression and plays an important role in transcriptional regulation, cell cycle progression and developmental events. Histone deacetylases act via the formation of large multiprotein complexes. Involved in muscle maturation by repressing transcription of myocyte enhancer factors such as MEF2A, MEF2B and MEF2C. During muscle differentiation, it shuttles into the cytoplasm, allowing the expression of myocyte enhancer factors. May be involved in Epstein-Barr virus (EBV) latency, possibly by repressing the viral BZLF1 gene. Positively regulates the transcriptional repressor activity of FOXP3. Serves as a corepressor of RARA, causing its deacetylation and inhibition of RARE DNA element binding. In association with RARA, plays a role in the repression of microRNA-10a and thereby in the inflammatory response. Also acetylates non-histone proteins, such as ALKBH5. The sequence is that of Histone deacetylase 7 (HDAC7) from Homo sapiens (Human).